The chain runs to 616 residues: Dihydroxy-acid dehydratase (616 aa).

Aspartate 81 contacts Mg(2+). Cysteine 122 contacts [2Fe-2S] cluster. Mg(2+) contacts are provided by aspartate 123 and lysine 124. Lysine 124 carries the N6-carboxylysine modification. Residue cysteine 195 participates in [2Fe-2S] cluster binding. A Mg(2+)-binding site is contributed by glutamate 491. The active-site Proton acceptor is serine 517.

It belongs to the IlvD/Edd family. In terms of assembly, homodimer. The cofactor is [2Fe-2S] cluster. Mg(2+) serves as cofactor.

It carries out the reaction (2R)-2,3-dihydroxy-3-methylbutanoate = 3-methyl-2-oxobutanoate + H2O. It catalyses the reaction (2R,3R)-2,3-dihydroxy-3-methylpentanoate = (S)-3-methyl-2-oxopentanoate + H2O. Its pathway is amino-acid biosynthesis; L-isoleucine biosynthesis; L-isoleucine from 2-oxobutanoate: step 3/4. It participates in amino-acid biosynthesis; L-valine biosynthesis; L-valine from pyruvate: step 3/4. Its function is as follows. Functions in the biosynthesis of branched-chain amino acids. Catalyzes the dehydration of (2R,3R)-2,3-dihydroxy-3-methylpentanoate (2,3-dihydroxy-3-methylvalerate) into 2-oxo-3-methylpentanoate (2-oxo-3-methylvalerate) and of (2R)-2,3-dihydroxy-3-methylbutanoate (2,3-dihydroxyisovalerate) into 2-oxo-3-methylbutanoate (2-oxoisovalerate), the penultimate precursor to L-isoleucine and L-valine, respectively. In Shigella boydii serotype 4 (strain Sb227), this protein is Dihydroxy-acid dehydratase.